The chain runs to 311 residues: Malate dehydrogenase (311 aa).

Residues 7 to 13 and Asp-34 each bind NAD(+); that span reads GAAGGIG. The substrate site is built by Arg-81 and Arg-87. NAD(+)-binding positions include Asn-94 and 117–119; that span reads ITN. Substrate-binding residues include Asn-119 and Arg-153. The Proton acceptor role is filled by His-177. Met-227 contacts NAD(+).

The protein belongs to the LDH/MDH superfamily. MDH type 1 family. Homodimer.

It catalyses the reaction (S)-malate + NAD(+) = oxaloacetate + NADH + H(+). Catalyzes the reversible oxidation of malate to oxaloacetate. The chain is Malate dehydrogenase from Haemophilus influenzae (strain PittGG).